The chain runs to 670 residues: MESQASENGSQTSSGVTDDYSSWYIEEPLGAEEVQPEGVIPLCQLTAPPALLHACLASLSFLVLLLLALLVRRRRLWPRCGHRGLGLPSPVDFLAGDLSWTVPAAVFVVLFSNLCLLLPDENPLPFLNLTAASSPDGEMETSRGPWKLLALLYYPALYYPLAACASAGHQAAFLLGTVLSWAHFGVQVWQKAECPQDPKIYKHYSLLASLPLLLGLGFLSLWYPVQLVQSLRHRTGAGSQGLQTSYSEKYLRTLLCPKKLDSCSHPASKRSLLSRAWAFSHHSIYTPQPGFRLPLKLVISATLTGTATYQVALLLLVSVVPTVQKVRAGINTDVSYLLAGFGIVLSEDRQEVVELVKHHLWTVEACYISALVLSCASTFLLLIRSLRTHRANLQALHRGAALDLDPPLQSIHPSRQAIVSWMSFCAYQTAFSCLGLLVQQVIFFLGTTSLAFLVFVPLLHGRNLLLLRSLESTWPFWLTVALAVILQNIAANWIFLRTHHGYPELTNRRMLCVATFLLFPINMLVGAIMAVWRVLISSLYNTVHLGQMDLSLLPQRAASLDPGYHTYQNFLRIEASQSHPGVIAFCALLLHAPSPQPRPPLAPQDSLRPAEEEEGMQLLQTKDLMAKGAGHKGSQSRARWGLAYTLLHNPSLQAFRKAALTSAKANGTQP.

Over 1–50 (MESQASENGSQTSSGVTDDYSSWYIEEPLGAEEVQPEGVIPLCQLTAPPA) the chain is Extracellular. The N-linked (GlcNAc...) asparagine glycan is linked to Asn8. The helical transmembrane segment at 51-71 (LLHACLASLSFLVLLLLALLV) threads the bilayer. The Cytoplasmic segment spans residues 72–97 (RRRRLWPRCGHRGLGLPSPVDFLAGD). The chain crosses the membrane as a helical span at residues 98–118 (LSWTVPAAVFVVLFSNLCLLL). Residues 119–144 (PDENPLPFLNLTAASSPDGEMETSRG) lie on the Extracellular side of the membrane. Asn128 carries an N-linked (GlcNAc...) asparagine glycan. A helical membrane pass occupies residues 145–165 (PWKLLALLYYPALYYPLAACA). The Cytoplasmic portion of the chain corresponds to 166–168 (SAG). Residues 169 to 189 (HQAAFLLGTVLSWAHFGVQVW) traverse the membrane as a helical segment. Topologically, residues 190 to 205 (QKAECPQDPKIYKHYS) are extracellular. Residues 206-226 (LLASLPLLLGLGFLSLWYPVQ) traverse the membrane as a helical segment. Residues 227–296 (LVQSLRHRTG…PQPGFRLPLK (70 aa)) are Cytoplasmic-facing. The interaction with RBP1 stretch occupies residues 235 to 294 (TGAGSQGLQTSYSEKYLRTLLCPKKLDSCSHPASKRSLLSRAWAFSHHSIYTPQPGFRLP). The chain crosses the membrane as a helical span at residues 297 to 317 (LVISATLTGTATYQVALLLLV). At 318-368 (SVVPTVQKVRAGINTDVSYLLAGFGIVLSEDRQEVVELVKHHLWTVEACYI) the chain is on the extracellular side. Residues 369–389 (SALVLSCASTFLLLIRSLRTH) traverse the membrane as a helical segment. The Cytoplasmic portion of the chain corresponds to 390–423 (RANLQALHRGAALDLDPPLQSIHPSRQAIVSWMS). The chain crosses the membrane as a helical span at residues 424–444 (FCAYQTAFSCLGLLVQQVIFF). Residues 445–474 (LGTTSLAFLVFVPLLHGRNLLLLRSLESTW) lie on the Extracellular side of the membrane. The helical transmembrane segment at 475–495 (PFWLTVALAVILQNIAANWIF) threads the bilayer. Topologically, residues 496–510 (LRTHHGYPELTNRRM) are cytoplasmic. The segment at residues 511–548 (LCVATFLLFPINMLVGAIMAVWRVLISSLYNTVHLGQM) is an intramembrane region (helical). The Cytoplasmic segment spans residues 549-670 (DLSLLPQRAA…TSAKANGTQP (122 aa)). Tyr644 bears the Phosphotyrosine mark.

In terms of assembly, homodimer. Interacts with JAK2 and STAT5. Interacts (via extracellular domains) with RBP4. Interacts (via cytoplasmic domains) with RBP1. Phosphorylated on tyrosine residues in response to RBP4 binding. Phosphorylation requires the presence of LRAT, suggesting it may be triggered by the uptake of retinol that is then metabolized within the cell to retinoids that function as signaling molecules. Widely expressed in the embryo. Detected in adult in the retinal pigment epithelium in the eye. In the adult, is highly expressed in cells that compose blood-organ barriers in the brain (choroid plexus and the brain microvascular), in testis (the basal layer of the seminiferous epithelium), in the yolk sac, and in the chorioallantoic placenta. Detected in white adipose tissue and skeletal muscle, but not in liver (at protein level). Widely expressed in adult, with high expression levels in the eye. Detected in brain, cerebellum, testis, pituitary, pancreas, kidney, spleen, and female genital tract; and at very low levels in heart and lung. Not detected in liver.

The protein resides in the cell membrane. Functions as a retinol transporter. Accepts all-trans retinol from the extracellular retinol-binding protein RBP4, facilitates retinol transport across the cell membrane, and then transfers retinol to the cytoplasmic retinol-binding protein RBP1. Retinol uptake is enhanced by LRAT, an enzyme that converts retinol to all-trans retinyl esters, the storage forms of vitamin A. Contributes to the activation of a signaling cascade that depends on retinol transport and LRAT-dependent generation of retinol metabolites that then trigger activation of JAK2 and its target STAT5, and ultimately increase the expression of SOCS3 and inhibit cellular responses to insulin. Important for the homeostasis of vitamin A and its derivatives, such as retinoic acid and 11-cis-retinal. STRA6-mediated transport is particularly important in the eye, and under conditions of dietary vitamin A deficiency. Does not transport retinoic acid. The chain is Receptor for retinol uptake STRA6 (Stra6) from Mus musculus (Mouse).